Consider the following 518-residue polypeptide: GMP synthase [glutamine-hydrolyzing] (518 aa).

A Glutamine amidotransferase type-1 domain is found at 6–200; it reads RLLIIDFGSQ…FVKLAGFKGD (195 aa). The active-site Nucleophile is the Cys84. Active-site residues include His175 and Glu177. The GMPS ATP-PPase domain maps to 201-393; it reads WTMGAYREEA…LGLPDSFIGR (193 aa). Residue 228-234 participates in ATP binding; it reads SGGVDSS.

Homodimer.

It catalyses the reaction XMP + L-glutamine + ATP + H2O = GMP + L-glutamate + AMP + diphosphate + 2 H(+). It functions in the pathway purine metabolism; GMP biosynthesis; GMP from XMP (L-Gln route): step 1/1. Functionally, catalyzes the synthesis of GMP from XMP. In Cereibacter sphaeroides (strain ATCC 17025 / ATH 2.4.3) (Rhodobacter sphaeroides), this protein is GMP synthase [glutamine-hydrolyzing].